A 216-amino-acid chain; its full sequence is Phosducin-like protein 3 (216 aa).

Residues 13 to 59 (AKTIEQQLDQQLDRLDNLDSDDLKVLREQRLREMKDLNNKKQEWLRN) adopt a coiled-coil conformation. In terms of domain architecture, Phosducin spans 29 to 163 (NLDSDDLKVL…DLGNCDDFAT (135 aa)).

Belongs to the phosducin family. In terms of tissue distribution, highly expressed in germline cells of the testis from the spermatogonia stage until the early spermatid stage but is no longer observed in late-stage spermatids in the distal end of the testis.

The enzyme catalyses [thioredoxin]-dithiol + NADP(+) = [thioredoxin]-disulfide + NADPH + H(+). Its function is as follows. Has redox activity with thioredoxin. Required for male fertility and maturation of sperm past the canoe stage during spermiogenesis. This Drosophila melanogaster (Fruit fly) protein is Phosducin-like protein 3.